The following is a 283-amino-acid chain: MTVQTSKNPQVDIAEDNAFFPSEYSLSQYTSPVSDLDGVDYPKPYRGKHKILVIAADERYLPTDNGKLFSTGNHPIETLLPLYHLHAAGFEFEVATISGLMTKFEYWAMPHKDEKVMPFFEQHKSLFRNPKKLADVVASLNADSEYAAIFVPGGHGALIGLPESQDVAAALQWAIKNDRFVISLCHGPAAFLALRHSDNPLNGYSICAFPDAADKQTPDIGYMPGHLTWYFGEELKKMGMNIINDDITGRVHKDRKRLTGDSPFAANALGKLAAQEMLAAYAS.

The Zn(2+) site is built by His86, Glu91, and His123. The active-site Nucleophile is Cys185.

It belongs to the peptidase C56 family. HchA subfamily. In terms of assembly, homodimer.

The protein localises to the cytoplasm. The enzyme catalyses N(omega)-(1-hydroxy-2-oxopropyl)-L-arginyl-[protein] + H2O = lactate + L-arginyl-[protein] + H(+). It carries out the reaction N(6)-(1-hydroxy-2-oxopropyl)-L-lysyl-[protein] + H2O = lactate + L-lysyl-[protein] + H(+). The catalysed reaction is S-(1-hydroxy-2-oxopropyl)-L-cysteinyl-[protein] + H2O = lactate + L-cysteinyl-[protein] + H(+). It catalyses the reaction N(omega)-(1-hydroxy-2-oxoethyl)-L-arginyl-[protein] + H2O = L-arginyl-[protein] + glycolate + H(+). The enzyme catalyses N(6)-(1-hydroxy-2-oxoethyl)-L-lysyl-[protein] + H2O = glycolate + L-lysyl-[protein] + H(+). It carries out the reaction S-(1-hydroxy-2-oxoethyl)-L-cysteinyl-[protein] + H2O = glycolate + L-cysteinyl-[protein] + H(+). The catalysed reaction is N(2)-(1-hydroxy-2-oxopropyl)-dGTP + H2O = lactate + dGTP + H(+). It catalyses the reaction N(2)-(1-hydroxy-2-oxopropyl)-GTP + H2O = lactate + GTP + H(+). The enzyme catalyses N(2)-(1-hydroxy-2-oxopropyl)-GDP + H2O = lactate + GDP + H(+). It carries out the reaction N(2)-(1-hydroxy-2-oxopropyl)-GMP + H2O = lactate + GMP + H(+). The catalysed reaction is N(2)-(1-hydroxy-2-oxoethyl)-dGTP + H2O = dGTP + glycolate + H(+). It catalyses the reaction N(2)-(1-hydroxy-2-oxoethyl)-GTP + H2O = glycolate + GTP + H(+). The enzyme catalyses N(2)-(1-hydroxy-2-oxoethyl)-GDP + H2O = glycolate + GDP + H(+). It carries out the reaction N(2)-(1-hydroxy-2-oxoethyl)-GMP + H2O = glycolate + GMP + H(+). The catalysed reaction is an N(2)-(1-hydroxy-2-oxopropyl)-guanosine in RNA + H2O = a guanosine in RNA + lactate + H(+). It catalyses the reaction an N(2)-(1-hydroxy-2-oxopropyl)-2'-deoxyguanosine in DNA + H2O = a 2'-deoxyguanosine in DNA + lactate + H(+). The enzyme catalyses an N(2)-(1-hydroxy-2-oxoethyl)-guanosine in RNA + H2O = a guanosine in RNA + glycolate + H(+). It carries out the reaction an N(2)-(1-hydroxy-2-oxoethyl)-2'-deoxyguanosine in DNA + H2O = a 2'-deoxyguanosine in DNA + glycolate + H(+). Its function is as follows. Protein and nucleotide deglycase that catalyzes the deglycation of the Maillard adducts formed between amino groups of proteins or nucleotides and reactive carbonyl groups of glyoxals. Thus, functions as a protein deglycase that repairs methylglyoxal- and glyoxal-glycated proteins, and releases repaired proteins and lactate or glycolate, respectively. Deglycates cysteine, arginine and lysine residues in proteins, and thus reactivates these proteins by reversing glycation by glyoxals. Acts on early glycation intermediates (hemithioacetals and aminocarbinols), preventing the formation of Schiff bases and advanced glycation endproducts (AGE). Also functions as a nucleotide deglycase able to repair glycated guanine in the free nucleotide pool (GTP, GDP, GMP, dGTP) and in DNA and RNA. Is thus involved in a major nucleotide repair system named guanine glycation repair (GG repair), dedicated to reversing methylglyoxal and glyoxal damage via nucleotide sanitization and direct nucleic acid repair. Plays an important role in protecting cells from carbonyl stress. The protein is Protein/nucleic acid deglycase HchA of Shigella flexneri.